The sequence spans 508 residues: MGLPWYRVHTVVLNDPGRLLSVHIMHTALVSGWAGSMALYELAVFDPSDPVLDPMWRQGMFVIPFMTRLGINNSWGGWSITGGTITNPGIWSYEGVAGAHIVFSGLCFLAAIWHWVYWDLEIFCDERTGKPSLDLPKIFGIHLFLSGVACFGFGAFHVTGLYGPGIWVSDPYGLTGKVQSVNPAWGAEGFDPFVPGGIASHHIAAGTLGILAGLFHLSVRPPQRLYKGLRMGNIETVLSSSIAAVFFAAFVVAGTMWYGSATTPIELFGPTRYQWDQGYFQQEIYRRVGTGLSENQSLSEAWSKIPEKLAFYDYIGNNPAKGGLFRAGPMDNGDGIAVGWLGHPIFRDKEGHELFVRRMPTFFETFPVVLVDGDGIVRADVPFRRAESKYSVEQVGVTVEFYGGELNGVSYSDPATVKKYARRAQLGEIFELDRATLKSDGVFRSSPRGWFTFGHATFALLFFFGHIWHGARTLFRDVFAGIDPDLDAQVEFGTFQKLGDPTTRRQVV.

The next 6 helical transmembrane spans lie at serine 21–serine 36, isoleucine 101–tryptophan 115, glycine 140–phenylalanine 156, isoleucine 203–serine 218, valine 237–valine 252, and threonine 457–arginine 472.

This sequence belongs to the PsbB/PsbC family. PsbB subfamily. In terms of assembly, PSII is composed of 1 copy each of membrane proteins PsbA, PsbB, PsbC, PsbD, PsbE, PsbF, PsbH, PsbI, PsbJ, PsbK, PsbL, PsbM, PsbT, PsbX, PsbY, PsbZ, Psb30/Ycf12, at least 3 peripheral proteins of the oxygen-evolving complex and a large number of cofactors. It forms dimeric complexes. Requires Binds multiple chlorophylls. PSII binds additional chlorophylls, carotenoids and specific lipids. as cofactor.

Its subcellular location is the plastid. The protein localises to the chloroplast thylakoid membrane. Functionally, one of the components of the core complex of photosystem II (PSII). It binds chlorophyll and helps catalyze the primary light-induced photochemical processes of PSII. PSII is a light-driven water:plastoquinone oxidoreductase, using light energy to abstract electrons from H(2)O, generating O(2) and a proton gradient subsequently used for ATP formation. The polypeptide is Photosystem II CP47 reaction center protein (Chloranthus spicatus (Chulantree)).